Reading from the N-terminus, the 422-residue chain is Elongation factor 1-alpha (422 aa).

The 217-residue stretch at 5-221 folds into the tr-type G domain; the sequence is KPHQNLAVIG…NDLPEPQPPT (217 aa). Positions 14–21 are G1; the sequence is GHVDHGKS. Residue 14-21 participates in GTP binding; it reads GHVDHGKS. Position 21 (S21) interacts with Mg(2+). The tract at residues 70-74 is G2; the sequence is GVTID. Residues 91–94 form a G3 region; that stretch reads DCPG. GTP-binding positions include 91–95 and 146–149; these read DCPGH and NKMD. Residues 146 to 149 form a G4 region; sequence NKMD. A G5 region spans residues 185–187; it reads SAF.

It belongs to the TRAFAC class translation factor GTPase superfamily. Classic translation factor GTPase family. EF-Tu/EF-1A subfamily.

The protein resides in the cytoplasm. It carries out the reaction GTP + H2O = GDP + phosphate + H(+). Its function is as follows. GTP hydrolase that promotes the GTP-dependent binding of aminoacyl-tRNA to the A-site of ribosomes during protein biosynthesis. The protein is Elongation factor 1-alpha of Natronomonas pharaonis (strain ATCC 35678 / DSM 2160 / CIP 103997 / JCM 8858 / NBRC 14720 / NCIMB 2260 / Gabara) (Halobacterium pharaonis).